A 486-amino-acid polypeptide reads, in one-letter code: Argininosuccinate lyase (486 aa).

This sequence belongs to the lyase 1 family. Argininosuccinate lyase subfamily.

Its subcellular location is the cytoplasm. It carries out the reaction 2-(N(omega)-L-arginino)succinate = fumarate + L-arginine. It functions in the pathway amino-acid biosynthesis; L-arginine biosynthesis; L-arginine from L-ornithine and carbamoyl phosphate: step 3/3. The polypeptide is Argininosuccinate lyase (Acidobacterium capsulatum (strain ATCC 51196 / DSM 11244 / BCRC 80197 / JCM 7670 / NBRC 15755 / NCIMB 13165 / 161)).